Here is a 920-residue protein sequence, read N- to C-terminus: DNA ligase (920 aa).

Residues 90-94 (DAAYD), 139-140 (SL), and E173 each bind NAD(+). Residue K175 is the N6-AMP-lysine intermediate of the active site. NAD(+) contacts are provided by R196, E235, K360, and K384. Zn(2+)-binding residues include C481, C484, C500, and C506. The segment at 662-691 (GEAAIESAETQGDTASETTGAPTGAEAPLG) is disordered. Residues 669-682 (AETQGDTASETTGA) show a composition bias toward polar residues. The 82-residue stretch at 839–920 (SLPQTLAGKT…FAQLLATGTI (82 aa)) folds into the BRCT domain.

Belongs to the NAD-dependent DNA ligase family. LigA subfamily. Mg(2+) is required as a cofactor. The cofactor is Mn(2+).

It catalyses the reaction NAD(+) + (deoxyribonucleotide)n-3'-hydroxyl + 5'-phospho-(deoxyribonucleotide)m = (deoxyribonucleotide)n+m + AMP + beta-nicotinamide D-nucleotide.. DNA ligase that catalyzes the formation of phosphodiester linkages between 5'-phosphoryl and 3'-hydroxyl groups in double-stranded DNA using NAD as a coenzyme and as the energy source for the reaction. It is essential for DNA replication and repair of damaged DNA. This is DNA ligase from Bifidobacterium longum (strain DJO10A).